Reading from the N-terminus, the 343-residue chain is NAC domain-containing protein 4 (343 aa).

One can recognise an NAC domain in the interval 12 to 168; the sequence is LPPGFRFHPT…EWVLCRVFKK (157 aa). The DNA-binding element occupies 109-174; the sequence is VGMKKTLVFY…VFKKSLVEVG (66 aa). The tract at residues 304–333 is disordered; the sequence is GGERERLSASQDTGLTSDVNPEISSSSGQK. Polar residues predominate over residues 311–332; the sequence is SASQDTGLTSDVNPEISSSSGQ.

As to expression, expressed in roots, tiller buds, stems, leaves, lamina joints and the young husks. Expressed in embryos, coleoptiles, radicles, leaf pulvinus, ligules, panicles, palea and lemma, anthers, and the internode of the peduncles. Expressed in young leaves, root meristems, florescence meristems and young spikelets.

The protein localises to the nucleus. Its function is as follows. Transcription factor involved in the regulation of tiller bud outgrowth, but does not seem to regulate tiller bud initiation. Possesses transactivation activity in yeast. Involved in the regulation of plant architecture and grain yield. Acts as a negative regulator of plant height and flowering time. Regulates directly key genes of the gibberellin (GA) pathway by binding to their promoters. Positively regulates leaf senescence in an age-dependent manner. Activates directly the expression of the chlorophyll degradation genes SGR and NYC3. Positively regulates the level of abscisic acid (ABA) by directly up-regulating the expression of the ABA biosynthetic genes NCED3 and ZEP, and down-regulating the ABA catabolic gene CYP707A5/ABA8OX1. Promotes salt-induced cell death accompanied by the loss of plasma membrane integrity, nuclear DNA fragmentation, and changes of caspase-like activity. Targets genes that encoded a reactive oxygen species (ROS) scavenger COX11 and a caspase-like protease AP37. Activates the potassium efflux channels GORK and SKOR. Acts as a positive regulator of drought and salt tolerance through ABA-mediated pathways. Acts as a negative regulator of root growth. Functions as an upstream integrator of auxin and cytokinin signals that affect CROWN ROOTLESS (CRL) and cyclin-dependent protein kinase (CDK) genes to regulate cell division during root development. Binds directly to the promoters of the auxin inactivation-related genes GH3.6 and GH3.8, the auxin signaling-related gene ARF25, and the cytokinin oxidase gene CKX4. Activates directly the expressions of the 1-aminocyclopropane-1-carboxylate oxidase genes ACO1 and ACO3, enhancing ethylene synthesis, and then retarding seedling establishment. The sequence is that of NAC domain-containing protein 4 from Oryza sativa subsp. japonica (Rice).